The chain runs to 553 residues: MAAPAAGPVFWRRLLGLLPGRPGLAALLGRLSDRLGRSRERRRRRSPWLLLAPLLSPTVPQVTSPPCCLCPEGVHRFQWIRNLVPEFGVSSSHVRVLSSPAEFFELLKGQIKMAKRRVVMASLYLGTGPLEQELVDCLESSLEKSLQSKFPSDLKVSILLDFTRGSRGRKNSRTMLLPLLQRFPEHVRVSLFHTPNLRGLLRLLIPERFNETIGLQHIKVYLFDNNVVLSGANLSDSYFTNRQDRYVFLQDCAEIADFFTELVDAVGDVSLQLQGDDTVDVVDGMVHPYKGDRAAYCRAANKRVMDVIHSARTRQQLLHAQTFHSDSLLSQEEAAAAGDRRPAPDTWIYPLIQMKPFEIQIDEIVTETLLTEAERGAKVFLTTGYFNLTQAYMDLVLGTRAEYQILLASPEVNGFFGAKGVAGAIPAAYVHIERQFYGEVCGLGQQDRVQLQEYWRTGWTFHAKGLWLYLAGSSLPCLTLIGSPNFGYRSVHRDLEAQIAIVTESRALQQQLHQEQEQLYLRSSVVTSATFEQPGRQVKLWVKMVTPLIKNFF.

Residues 1–25 (MAAPAAGPVFWRRLLGLLPGRPGLA) constitute a mitochondrion transit peptide. A Phosphoserine modification is found at serine 46. Position 121-128 (121-128 (ASLYLGTG)) interacts with ATP. PLD phosphodiesterase domains follow at residues 212–238 (TIGLQHIKVYLFDNNVVLSGANLSDSY) and 457–490 (TGWTFHAKGLWLYLAGSSLPCLTLIGSPNFGYRS). Catalysis depends on residues histidine 217, lysine 219, and aspartate 224.

Belongs to the CDP-alcohol phosphatidyltransferase class-II family.

Its subcellular location is the mitochondrion. It catalyses the reaction a CDP-1,2-diacyl-sn-glycerol + sn-glycerol 3-phosphate = a 1,2-diacyl-sn-glycero-3-phospho-(1'-sn-glycero-3'-phosphate) + CMP + H(+). Its pathway is phospholipid metabolism; phosphatidylglycerol biosynthesis; phosphatidylglycerol from CDP-diacylglycerol: step 1/2. Its activity is regulated as follows. Activated by calcium and magnesium and inhibited by other bivalent cations. Functions in the biosynthesis of the anionic phospholipids phosphatidylglycerol and cardiolipin. The sequence is that of CDP-diacylglycerol--glycerol-3-phosphate 3-phosphatidyltransferase, mitochondrial (PGS1) from Cricetulus griseus (Chinese hamster).